The primary structure comprises 173 residues: Photosystem I assembly protein Ycf3 (173 aa).

TPR repeat units follow at residues 35–68 (AFYYYKDGMAAQSEGEYAEALACYYQALKIEKDP), 72–105 (SFILYNIGLIQASNGQHARALEYYHESLKFNPNL), and 120–153 (GNKLFEQSKLQEAKLMFDKASNYWRKAIKLAPYN).

This sequence belongs to the Ycf3 family.

The protein localises to the plastid. It localises to the chloroplast thylakoid membrane. Its function is as follows. Essential for the assembly of the photosystem I (PSI) complex. May act as a chaperone-like factor to guide the assembly of the PSI subunits. This chain is Photosystem I assembly protein Ycf3, found in Cyanidium caldarium (Red alga).